A 420-amino-acid chain; its full sequence is UDP-N-acetylglucosamine 1-carboxyvinyltransferase (420 aa).

Position 22–23 (22–23 (KN)) interacts with phosphoenolpyruvate. R92 contacts UDP-N-acetyl-alpha-D-glucosamine. C116 serves as the catalytic Proton donor. 2-(S-cysteinyl)pyruvic acid O-phosphothioketal is present on C116. Residues D306 and I328 each coordinate UDP-N-acetyl-alpha-D-glucosamine.

This sequence belongs to the EPSP synthase family. MurA subfamily.

The protein resides in the cytoplasm. It carries out the reaction phosphoenolpyruvate + UDP-N-acetyl-alpha-D-glucosamine = UDP-N-acetyl-3-O-(1-carboxyvinyl)-alpha-D-glucosamine + phosphate. Its pathway is cell wall biogenesis; peptidoglycan biosynthesis. Functionally, cell wall formation. Adds enolpyruvyl to UDP-N-acetylglucosamine. This Blochmanniella floridana protein is UDP-N-acetylglucosamine 1-carboxyvinyltransferase.